The sequence spans 200 residues: Recombination protein RecR (200 aa).

The C4-type zinc finger occupies 57 to 72 (CRQCRTLTEQELCPQC). Positions 80–175 (TQLCVVEGPT…AATRIAHGVP (96 aa)) constitute a Toprim domain.

The protein belongs to the RecR family.

In terms of biological role, may play a role in DNA repair. It seems to be involved in an RecBC-independent recombinational process of DNA repair. It may act with RecF and RecO. In Pseudomonas putida (strain GB-1), this protein is Recombination protein RecR.